A 336-amino-acid polypeptide reads, in one-letter code: Ornithine carbamoyltransferase, catabolic (336 aa).

Residues 62–65 (STRT), Gln89, Arg113, and 140–143 (HPTQ) each bind carbamoyl phosphate. L-ornithine contacts are provided by residues Asn172, Asp236, and 240 to 241 (SM). Carbamoyl phosphate-binding positions include 277–278 (CL) and Arg322.

It belongs to the aspartate/ornithine carbamoyltransferase superfamily. OTCase family.

It localises to the cytoplasm. The enzyme catalyses carbamoyl phosphate + L-ornithine = L-citrulline + phosphate + H(+). Its pathway is amino-acid degradation; L-arginine degradation via ADI pathway; carbamoyl phosphate from L-arginine: step 2/2. Reversibly catalyzes the transfer of the carbamoyl group from carbamoyl phosphate (CP) to the N(epsilon) atom of ornithine (ORN) to produce L-citrulline. The protein is Ornithine carbamoyltransferase, catabolic of Staphylococcus aureus (strain MSSA476).